Reading from the N-terminus, the 577-residue chain is Phosphoethanolamine transferase EptC (577 aa).

A run of 5 helical transmembrane segments spans residues 17–37 (LGWA…IIYI), 44–64 (NGIR…FLFP), 69–89 (IIAA…LCYY), 119–139 (YFSL…VLLW), and 154–174 (VVSF…NTFI).

It belongs to the phosphoethanolamine transferase family. EptC/CptA subfamily.

Its subcellular location is the cell inner membrane. Its pathway is bacterial outer membrane biogenesis; LPS core biosynthesis. Its function is as follows. Catalyzes the addition of a phosphoethanolamine moiety to the outer membrane lipopolysaccharide core. Plays a role in the pathogenesis of E.coli meningitis. Required for invasion of E.coli K1 into brain microvascular endothelial cells (BMEC). Contributes to E.coli traversal across the blood-brain barrier. This chain is Phosphoethanolamine transferase EptC (eptC), found in Escherichia coli O18:K1:H7 (strain RS218 / NMEC).